The primary structure comprises 143 residues: Small ribosomal subunit protein uS11c (143 aa).

Belongs to the universal ribosomal protein uS11 family. In terms of assembly, part of the 30S ribosomal subunit.

It is found in the plastid. Its subcellular location is the chloroplast. This Oryza nivara (Indian wild rice) protein is Small ribosomal subunit protein uS11c.